Here is a 273-residue protein sequence, read N- to C-terminus: Putative phosphoenolpyruvate synthase regulatory protein (273 aa).

153-160 (GVSRSGKT) lines the ADP pocket.

This sequence belongs to the pyruvate, phosphate/water dikinase regulatory protein family. PSRP subfamily.

It catalyses the reaction [pyruvate, water dikinase] + ADP = [pyruvate, water dikinase]-phosphate + AMP + H(+). The catalysed reaction is [pyruvate, water dikinase]-phosphate + phosphate + H(+) = [pyruvate, water dikinase] + diphosphate. Functionally, bifunctional serine/threonine kinase and phosphorylase involved in the regulation of the phosphoenolpyruvate synthase (PEPS) by catalyzing its phosphorylation/dephosphorylation. In Leptothrix cholodnii (strain ATCC 51168 / LMG 8142 / SP-6) (Leptothrix discophora (strain SP-6)), this protein is Putative phosphoenolpyruvate synthase regulatory protein.